A 414-amino-acid polypeptide reads, in one-letter code: Esterase FrsA (414 aa).

It belongs to the FrsA family.

It carries out the reaction a carboxylic ester + H2O = an alcohol + a carboxylate + H(+). Functionally, catalyzes the hydrolysis of esters. The sequence is that of Esterase FrsA from Citrobacter koseri (strain ATCC BAA-895 / CDC 4225-83 / SGSC4696).